Here is a 285-residue protein sequence, read N- to C-terminus: Nucleotide-binding protein Pfl01_0854 (285 aa).

Residue 8 to 15 (GRSGSGKS) coordinates ATP. Residue 60 to 63 (DARN) coordinates GTP.

It belongs to the RapZ-like family.

Its function is as follows. Displays ATPase and GTPase activities. The polypeptide is Nucleotide-binding protein Pfl01_0854 (Pseudomonas fluorescens (strain Pf0-1)).